A 350-amino-acid polypeptide reads, in one-letter code: Spermidine/putrescine import ATP-binding protein PotA (350 aa).

Positions 6 to 236 constitute an ABC transporter domain; it reads LELRNVTKDY…PENLWVAKFI (231 aa). Position 38 to 45 (38 to 45) interacts with ATP; the sequence is GPSGCGKT.

The protein belongs to the ABC transporter superfamily. Spermidine/putrescine importer (TC 3.A.1.11.1) family. The complex is composed of two ATP-binding proteins (PotA), two transmembrane proteins (PotB and PotC) and a solute-binding protein (PotD).

The protein localises to the cell membrane. It carries out the reaction ATP + H2O + polyamine-[polyamine-binding protein]Side 1 = ADP + phosphate + polyamineSide 2 + [polyamine-binding protein]Side 1.. Part of the ABC transporter complex PotABCD involved in spermidine/putrescine import. Responsible for energy coupling to the transport system. The sequence is that of Spermidine/putrescine import ATP-binding protein PotA from Mesoplasma florum (strain ATCC 33453 / NBRC 100688 / NCTC 11704 / L1) (Acholeplasma florum).